Consider the following 249-residue polypeptide: Triosephosphate isomerase (249 aa).

9–11 (NWK) lines the substrate pocket. Residue histidine 95 is the Electrophile of the active site. Glutamate 166 functions as the Proton acceptor in the catalytic mechanism. Residues glycine 172, serine 211, and 232–233 (GG) contribute to the substrate site.

This sequence belongs to the triosephosphate isomerase family. As to quaternary structure, homodimer.

It localises to the cytoplasm. The catalysed reaction is D-glyceraldehyde 3-phosphate = dihydroxyacetone phosphate. Its pathway is carbohydrate biosynthesis; gluconeogenesis. It functions in the pathway carbohydrate degradation; glycolysis; D-glyceraldehyde 3-phosphate from glycerone phosphate: step 1/1. Functionally, involved in the gluconeogenesis. Catalyzes stereospecifically the conversion of dihydroxyacetone phosphate (DHAP) to D-glyceraldehyde-3-phosphate (G3P). This chain is Triosephosphate isomerase, found in Legionella pneumophila (strain Paris).